Here is a 308-residue protein sequence, read N- to C-terminus: UDP-N-acetylenolpyruvoylglucosamine reductase (308 aa).

The 165-residue stretch at 32–196 (VGGPAARLYK…ISAKLQLSPG (165 aa)) folds into the FAD-binding PCMH-type domain. Residue Arg-176 is part of the active site. The Proton donor role is filled by Ser-225. Glu-296 is a catalytic residue.

Belongs to the MurB family. It depends on FAD as a cofactor.

Its subcellular location is the cytoplasm. The enzyme catalyses UDP-N-acetyl-alpha-D-muramate + NADP(+) = UDP-N-acetyl-3-O-(1-carboxyvinyl)-alpha-D-glucosamine + NADPH + H(+). It functions in the pathway cell wall biogenesis; peptidoglycan biosynthesis. Cell wall formation. The sequence is that of UDP-N-acetylenolpyruvoylglucosamine reductase from Legionella pneumophila (strain Corby).